A 1170-amino-acid chain; its full sequence is MASSGGGGLRHSNSSRLSRMSYSGEDGRAQAPGGGGDRPMVTFARRTHSGRYVSYSRDDLDSELGNSGDMSPESGQEFLNYHVTIPATPDNQPMDPAISARVEEQYVSNSLFTGGFNSVTRAHLMDKVIESEASHPQMAGAKGSSCAINGCDAKVMSDERGDDILPCECDFKICADCFADAVKNGGACPGCKDPYKATELDDVVGARPTLSLPPPPGGLPASRMERRLSIMRSQKAMTRSQTGDWDHNRWLFETKGTYGYGNAIWPKENEVDNGGGGGGGGGLGGGDGQPAEFTSKPWRPLTRKLKIPAGVLSPYRLLILIRMAVLGLFLAWRIKHKNEDAMWLWGMSVVCELWFGLSWLLDQLPKLCPVNRATDLAVLKDKFETPTPSNPNGRSDLPGLDIFVSTADPEKEPPLVTANTILSILAADYPVEKLSCYVSDDGGALLTFEAMAEAASFANMWVPFCRKHDIEPRNPESYFNLKRDPYKNKVRSDFVKDRRRVKREYDEFKVRINSLPDSIRRRSDAYHAREEIKAMKRQREAALDDVVEAVKIPKATWMADGTHWPGTWIQPSAEHARGDHAGIIQVMLKPPSDDPLYGTSGEEGRPLDFTEVDIRLPMLVYVSREKRPGYDHNKKAGAMNALVRSSAVMSNGPFILNLDCDHYVYNSQAFREGMCFMMDRGGDRIGYVQFPQRFEGIDPSDRYANHNTVFFDVNMRALDGIMGPVYVGTGCLFRRIALYGFDPPRSKEHSGCCSCCFPQRRKVKTSTVASEERQALRMADFDDEEMNMSQFPKKFGNSNFLINSIPIAEFQGRPLADHPGVKNGRPPGALTVPRDLLDASTVAEAISVISCWYEDKTEWGQRVGWIYGSVTEDVVTGYRMHNRGWKSVYCVTKRDAFRGTAPINLTDRLHQVLRWATGSVEIFFSRNNALLASRKMKFLQRIAYLNVGIYPFTSIFLIVYCFLPALSLFSGQFIVRTLNVTFLTYLLVITLTMCMLAVLEIKWSGISLEEWWRNEQFWLIGGTSAHLAAVLQGLLKVIAGIEISFTLTSKSGGDEADDEFADLYIVKWTSLMIPPIVIMMVNLIAIAVGFSRTIYSEIPQWSKLLGGVFFSFWVLAHLYPFAKGLMGRRGRTPTIVFVWSGLLAITISLLWVAINPPSQNSQIGGSFTFP.

Disordered regions lie at residues 1 to 48 (MASS…RRTH), 54 to 73 (SYSRDDLDSELGNSGDMSPE), and 269 to 295 (NEVDNGGGGGGGGGLGGGDGQPAEFTS). A compositionally biased stretch (low complexity) spans 10–24 (RHSNSSRLSRMSYSG). Residues 273-288 (NGGGGGGGGGLGGGDG) show a composition bias toward gly residues. The next 2 membrane-spanning stretches (helical) occupy residues 311–331 (VLSPYRLLILIRMAVLGLFLA) and 341–361 (AMWLWGMSVVCELWFGLSWLL). Residue Asp-441 is part of the active site. The stretch at 527–551 (HAREEIKAMKRQREAALDDVVEAVK) forms a coiled coil. The active site involves Asp-873. 6 helical membrane passes run 955 to 975 (IFLIVYCFLPALSLFSGQFIV), 981 to 1001 (TFLTYLLVITLTMCMLAVLEI), 1027 to 1047 (LAAVLQGLLKVIAGIEISFTL), 1070 to 1090 (SLMIPPIVIMMVNLIAIAVGF), 1104 to 1124 (LLGGVFFSFWVLAHLYPFAKG), and 1134 to 1154 (TIVFVWSGLLAITISLLWVAI).

This sequence belongs to the glycosyltransferase 2 family. Plant cellulose synthase-like D subfamily.

Its subcellular location is the golgi apparatus membrane. Functionally, thought to be a Golgi-localized beta-glycan synthase that polymerize the backbones of noncellulosic polysaccharides (hemicelluloses) of plant cell wall. This Oryza sativa subsp. japonica (Rice) protein is Cellulose synthase-like protein D2 (CSLD2).